Consider the following 320-residue polypeptide: tRNA(Ile)-lysidine synthase (320 aa).

33–38 provides a ligand contact to ATP; that stretch reads SGGPDS.

This sequence belongs to the tRNA(Ile)-lysidine synthase family.

The protein resides in the cytoplasm. It carries out the reaction cytidine(34) in tRNA(Ile2) + L-lysine + ATP = lysidine(34) in tRNA(Ile2) + AMP + diphosphate + H(+). Ligates lysine onto the cytidine present at position 34 of the AUA codon-specific tRNA(Ile) that contains the anticodon CAU, in an ATP-dependent manner. Cytidine is converted to lysidine, thus changing the amino acid specificity of the tRNA from methionine to isoleucine. The polypeptide is tRNA(Ile)-lysidine synthase (Mycolicibacterium paratuberculosis (strain ATCC BAA-968 / K-10) (Mycobacterium paratuberculosis)).